The following is a 471-amino-acid chain: Indole-3-acetate beta-glucosyltransferase (471 aa).

The active-site Proton acceptor is the H15. Residue H15 participates in an anthocyanidin binding. The Charge relay role is filled by D107. 9 residues coordinate UDP-alpha-D-glucose: T129, Q344, H359, W362, N363, S364, E367, D383, and Q384.

Belongs to the UDP-glycosyltransferase family.

It catalyses the reaction (indol-3-yl)acetate + UDP-alpha-D-glucose = 1-O-(indol-3-ylacetyl)-beta-D-glucose + UDP. The protein operates within plant hormone metabolism; auxin conjugation. The protein is Indole-3-acetate beta-glucosyltransferase (IAGLU) of Zea mays (Maize).